The following is a 211-amino-acid chain: ATP phosphoribosyltransferase (211 aa).

This sequence belongs to the ATP phosphoribosyltransferase family. Short subfamily. As to quaternary structure, heteromultimer composed of HisG and HisZ subunits.

The protein localises to the cytoplasm. It catalyses the reaction 1-(5-phospho-beta-D-ribosyl)-ATP + diphosphate = 5-phospho-alpha-D-ribose 1-diphosphate + ATP. Its pathway is amino-acid biosynthesis; L-histidine biosynthesis; L-histidine from 5-phospho-alpha-D-ribose 1-diphosphate: step 1/9. Functionally, catalyzes the condensation of ATP and 5-phosphoribose 1-diphosphate to form N'-(5'-phosphoribosyl)-ATP (PR-ATP). Has a crucial role in the pathway because the rate of histidine biosynthesis seems to be controlled primarily by regulation of HisG enzymatic activity. The chain is ATP phosphoribosyltransferase (hisG) from Pseudomonas aeruginosa (strain ATCC 15692 / DSM 22644 / CIP 104116 / JCM 14847 / LMG 12228 / 1C / PRS 101 / PAO1).